A 505-amino-acid chain; its full sequence is Ribose import ATP-binding protein RbsA 1 (505 aa).

2 consecutive ABC transporter domains span residues 13–249 and 254–503; these read LALR…VGRD and YPKQ…TGRA. 45–52 lines the ATP pocket; the sequence is GENGAGKS.

The protein belongs to the ABC transporter superfamily. Ribose importer (TC 3.A.1.2.1) family. In terms of assembly, the complex is composed of an ATP-binding protein (RbsA), two transmembrane proteins (RbsC) and a solute-binding protein (RbsB).

Its subcellular location is the cell membrane. The enzyme catalyses D-ribose(out) + ATP + H2O = D-ribose(in) + ADP + phosphate + H(+). In terms of biological role, part of the ABC transporter complex RbsABC involved in ribose import. Responsible for energy coupling to the transport system. The protein is Ribose import ATP-binding protein RbsA 1 of Streptomyces coelicolor (strain ATCC BAA-471 / A3(2) / M145).